The following is a 113-amino-acid chain: Large ribosomal subunit protein uL22 (113 aa).

Belongs to the universal ribosomal protein uL22 family. As to quaternary structure, part of the 50S ribosomal subunit.

Functionally, this protein binds specifically to 23S rRNA; its binding is stimulated by other ribosomal proteins, e.g. L4, L17, and L20. It is important during the early stages of 50S assembly. It makes multiple contacts with different domains of the 23S rRNA in the assembled 50S subunit and ribosome. The globular domain of the protein is located near the polypeptide exit tunnel on the outside of the subunit, while an extended beta-hairpin is found that lines the wall of the exit tunnel in the center of the 70S ribosome. The chain is Large ribosomal subunit protein uL22 from Bacillus pumilus (strain SAFR-032).